Reading from the N-terminus, the 510-residue chain is 2,3-bisphosphoglycerate-independent phosphoglycerate mutase (510 aa).

Asp12 and Ser62 together coordinate Mn(2+). Ser62 functions as the Phosphoserine intermediate in the catalytic mechanism. Residues His123, 153–154, Arg185, Arg191, 260–263, and Lys335 contribute to the substrate site; these read RD and RPDR. Asp402, His406, Asp443, His444, and His461 together coordinate Mn(2+).

This sequence belongs to the BPG-independent phosphoglycerate mutase family. In terms of assembly, monomer. Requires Mn(2+) as cofactor.

It catalyses the reaction (2R)-2-phosphoglycerate = (2R)-3-phosphoglycerate. The protein operates within carbohydrate degradation; glycolysis; pyruvate from D-glyceraldehyde 3-phosphate: step 3/5. In terms of biological role, catalyzes the interconversion of 2-phosphoglycerate and 3-phosphoglycerate. This Listeria monocytogenes serovar 1/2a (strain ATCC BAA-679 / EGD-e) protein is 2,3-bisphosphoglycerate-independent phosphoglycerate mutase.